Consider the following 507-residue polypeptide: Maturase K (507 aa).

Belongs to the intron maturase 2 family. MatK subfamily.

It localises to the plastid. Its subcellular location is the chloroplast. Usually encoded in the trnK tRNA gene intron. Probably assists in splicing its own and other chloroplast group II introns. The protein is Maturase K of Buxus microphylla (Littleleaf boxwood).